Consider the following 339-residue polypeptide: tRNA dimethylallyltransferase (339 aa).

ATP is bound at residue Gly33–Thr40. Thr35–Thr40 is a binding site for substrate. Interaction with substrate tRNA regions lie at residues Asp58–Leu61 and Gln182–Arg186.

It belongs to the IPP transferase family. In terms of assembly, monomer. The cofactor is Mg(2+).

It carries out the reaction adenosine(37) in tRNA + dimethylallyl diphosphate = N(6)-dimethylallyladenosine(37) in tRNA + diphosphate. Its function is as follows. Catalyzes the transfer of a dimethylallyl group onto the adenine at position 37 in tRNAs that read codons beginning with uridine, leading to the formation of N6-(dimethylallyl)adenosine (i(6)A). This Acidithiobacillus ferrooxidans (strain ATCC 23270 / DSM 14882 / CIP 104768 / NCIMB 8455) (Ferrobacillus ferrooxidans (strain ATCC 23270)) protein is tRNA dimethylallyltransferase.